We begin with the raw amino-acid sequence, 269 residues long: Intercellular adhesion molecule 4 (269 aa).

Residues 1–20 (SLFPLSLLFFLAAAYPGVGS) form the signal peptide. Residues 21–238 (ALGRRTKRAQ…MLAWSSAPTA (218 aa)) lie on the Extracellular side of the membrane. Ig-like C2-type domains lie at 60–122 (GKSV…TRWA) and 144–215 (GRKY…LNLD). 4 N-linked (GlcNAc...) asparagine glycosylation sites follow: N66, N76, N188, and N221. Intrachain disulfides connect C67–C111, C67–C115, C71–C115, and C151–C208. Residues 239 to 259 (LASVSIAALVGILLTVGAAYL) form a helical membrane-spanning segment. Over 260–269 (CKCLAMKSQA) the chain is Cytoplasmic.

This sequence belongs to the immunoglobulin superfamily. ICAM family. Post-translationally, N- and O-glycosylated.

The protein localises to the cell membrane. In terms of biological role, ICAM proteins are ligands for the leukocyte adhesion protein LFA-1 (integrin alpha-L/beta-2). ICAM4 is also a ligand for alpha-4/beta-1 and alpha-V integrins. In Pan troglodytes (Chimpanzee), this protein is Intercellular adhesion molecule 4 (ICAM4).